A 303-amino-acid polypeptide reads, in one-letter code: Epimerase family protein YfhF (303 aa).

This sequence belongs to the NAD(P)-dependent epimerase/dehydratase family. SDR39U1 subfamily.

This chain is Epimerase family protein YfhF (yfhF), found in Bacillus subtilis (strain 168).